Reading from the N-terminus, the 448-residue chain is UPF0210 protein Pars_1033 (448 aa).

This sequence belongs to the UPF0210 family.

The chain is UPF0210 protein Pars_1033 from Pyrobaculum arsenaticum (strain DSM 13514 / JCM 11321 / PZ6).